A 209-amino-acid polypeptide reads, in one-letter code: CASP-like protein 1B1 (209 aa).

The span at 1-10 shows a compositional bias: basic and acidic residues; it reads MDLERGDKKP. Residues 1–39 are disordered; sequence MDLERGDKKPPPPPPPAPRTAAATTTTTTTPACSGKKRP. Residues 1 to 49 lie on the Cytoplasmic side of the membrane; sequence MDLERGDKKPPPPPPPAPRTAAATTTTTTTPACSGKKRPPLRDSLVALQ. The span at 19–32 shows a compositional bias: low complexity; sequence RTAAATTTTTTTPA. A helical transmembrane segment spans residues 50–70; sequence PVLLRAAAALAAAAAAAVMAL. The Extracellular portion of the chain corresponds to 71 to 100; that stretch reads DAQSYTAVVAIVGTRPLTQTFTAKFSDTPA. Residues 101-121 form a helical membrane-spanning segment; the sequence is FVYFVIANAIAAAYNLLVLLV. Residues 122-134 lie on the Cytoplasmic side of the membrane; the sequence is RRRRRTTAGLVVR. The helical transmembrane segment at 135–155 threads the bilayer; the sequence is MLDMVVMALLATGAAAAASMA. The Extracellular segment spans residues 156 to 180; that stretch reads ELGRNGNARARWNPVCDRFGSFCRR. A helical membrane pass occupies residues 181 to 201; sequence GGAALAASFVGVALMLALNLL. Topologically, residues 202–209 are cytoplasmic; the sequence is SAASGAGC.

It belongs to the Casparian strip membrane proteins (CASP) family. As to quaternary structure, homodimer and heterodimers.

The protein localises to the cell membrane. The polypeptide is CASP-like protein 1B1 (Zea mays (Maize)).